We begin with the raw amino-acid sequence, 251 residues long: Triosephosphate isomerase (251 aa).

Residue 9–11 (NWK) coordinates substrate. His-94 functions as the Electrophile in the catalytic mechanism. Glu-167 serves as the catalytic Proton acceptor. Residues Gly-173, Ser-213, and 234–235 (GG) contribute to the substrate site.

The protein belongs to the triosephosphate isomerase family. In terms of assembly, homodimer.

It is found in the cytoplasm. The enzyme catalyses D-glyceraldehyde 3-phosphate = dihydroxyacetone phosphate. The protein operates within carbohydrate biosynthesis; gluconeogenesis. It functions in the pathway carbohydrate degradation; glycolysis; D-glyceraldehyde 3-phosphate from glycerone phosphate: step 1/1. Functionally, involved in the gluconeogenesis. Catalyzes stereospecifically the conversion of dihydroxyacetone phosphate (DHAP) to D-glyceraldehyde-3-phosphate (G3P). The protein is Triosephosphate isomerase of Finegoldia magna (strain ATCC 29328 / DSM 20472 / WAL 2508) (Peptostreptococcus magnus).